The primary structure comprises 490 residues: Probable cytosol aminopeptidase (490 aa).

Lys262 and Asp267 together coordinate Mn(2+). Lys274 is a catalytic residue. 3 residues coordinate Mn(2+): Asp285, Asp344, and Glu346. Arg348 is an active-site residue.

Belongs to the peptidase M17 family. It depends on Mn(2+) as a cofactor.

The protein resides in the cytoplasm. It catalyses the reaction Release of an N-terminal amino acid, Xaa-|-Yaa-, in which Xaa is preferably Leu, but may be other amino acids including Pro although not Arg or Lys, and Yaa may be Pro. Amino acid amides and methyl esters are also readily hydrolyzed, but rates on arylamides are exceedingly low.. The catalysed reaction is Release of an N-terminal amino acid, preferentially leucine, but not glutamic or aspartic acids.. Its function is as follows. Presumably involved in the processing and regular turnover of intracellular proteins. Catalyzes the removal of unsubstituted N-terminal amino acids from various peptides. The protein is Probable cytosol aminopeptidase of Mannheimia succiniciproducens (strain KCTC 0769BP / MBEL55E).